A 429-amino-acid polypeptide reads, in one-letter code: Enolase (429 aa).

Q162 lines the (2R)-2-phosphoglycerate pocket. The active-site Proton donor is the E204. Residues D242, E289, and D316 each contribute to the Mg(2+) site. K341, R370, S371, and K392 together coordinate (2R)-2-phosphoglycerate. Residue K341 is the Proton acceptor of the active site.

This sequence belongs to the enolase family. It depends on Mg(2+) as a cofactor.

Its subcellular location is the cytoplasm. The protein localises to the secreted. It localises to the cell surface. It carries out the reaction (2R)-2-phosphoglycerate = phosphoenolpyruvate + H2O. The protein operates within carbohydrate degradation; glycolysis; pyruvate from D-glyceraldehyde 3-phosphate: step 4/5. Its function is as follows. Catalyzes the reversible conversion of 2-phosphoglycerate (2-PG) into phosphoenolpyruvate (PEP). It is essential for the degradation of carbohydrates via glycolysis. The polypeptide is Enolase (Flavobacterium psychrophilum (strain ATCC 49511 / DSM 21280 / CIP 103535 / JIP02/86)).